Consider the following 2290-residue polypeptide: Protein Ycf2 (2290 aa).

Residues 505–530 are disordered; it reads GSNPTERSTRDQKSLKKQQDVSFVPP. Residues 511-523 show a composition bias toward basic and acidic residues; sequence RSTRDQKSLKKQQ. 1639-1646 serves as a coordination point for ATP; it reads GSIGTGRS.

The protein belongs to the Ycf2 family.

It localises to the plastid. Its subcellular location is the chloroplast stroma. Probable ATPase of unknown function. Its presence in a non-photosynthetic plant (Epifagus virginiana) and experiments in tobacco indicate that it has an essential function which is probably not related to photosynthesis. The chain is Protein Ycf2 from Ceratophyllum demersum (Rigid hornwort).